Consider the following 739-residue polypeptide: MMNEPTPKEIKETRLYAEWGLTDEEYHQIETILQREPNYTETGLFSVMWSEHCSYKNSKPVLKKFPTEGPQVLQGPGEGAGIVDIGDGLAVVFKAESHNHPSAVEPYEGAATGVGGIIRDIFSMGARPIALLDSLRFGELTDARTRYLFQEVVAGISGYGNCIGIPTVGGEIAFEPCYQGNPLVNAMCVGLIRHDEIQKGQAKGVGNSILYVGAKTGRDGIHGATFASEEFSEGEEQQRSAVQVGDPFMEKLLLEACLDLIKNHQDILIGIQDMGAAGLVSSSAEMASKAGSGLILELDKVPQRETQMSPYEMLLSESQERMLICVEKGAEQQVCELFQTYDLEAVAIGSVTDDGQYRVFHGGKIVADVPVDALAEEAPVYQKAYQEPERMRAFKKLAPFIPEITNSTELLKRLLQQPTIASKKSVYETYDSQVQTNTVVQPGSDAAVLRVRGTNKALAMTTDCNSRYLYLNPEIGGQIAVAEAARNIVASGAQPLAITDCLNYGSPDKPESFWELWTSADGIAAACRQLGTPVISGNVSLYNETDGQAIYPTPMIGMVGVIEDVSQITTQAFKQVDDLIYLIGETHADFNGSEIQKIQLGRIEGQLRSFDLKEEKANQELVLKAIQVGLVASAHDCAEGGVAVALAESAFANELGLQVTLPLKKEYLFAETQSRFILSVSPQHQEAFETLIGRKAQHIGKVTETGLVIHALDDVINCSTKEAKALWEDAIPCLMKQKA.

His-52 is an active-site residue. ATP is bound by residues Tyr-55 and Lys-94. Glu-96 is a binding site for Mg(2+). Substrate is bound by residues 97 to 100 and Arg-119; that span reads SHNH. His-98 acts as the Proton acceptor in catalysis. A Mg(2+)-binding site is contributed by Asp-120. Gln-243 contacts substrate. Asp-273 lines the Mg(2+) pocket. Residue 317 to 319 coordinates substrate; the sequence is ESQ. The ATP site is built by Asp-500 and Gly-537. Residue Asn-538 participates in Mg(2+) binding. Ser-540 lines the substrate pocket.

It belongs to the FGAMS family. Monomer. Part of the FGAM synthase complex composed of 1 PurL, 1 PurQ and 2 PurS subunits.

Its subcellular location is the cytoplasm. The catalysed reaction is N(2)-formyl-N(1)-(5-phospho-beta-D-ribosyl)glycinamide + L-glutamine + ATP + H2O = 2-formamido-N(1)-(5-O-phospho-beta-D-ribosyl)acetamidine + L-glutamate + ADP + phosphate + H(+). Its pathway is purine metabolism; IMP biosynthesis via de novo pathway; 5-amino-1-(5-phospho-D-ribosyl)imidazole from N(2)-formyl-N(1)-(5-phospho-D-ribosyl)glycinamide: step 1/2. In terms of biological role, part of the phosphoribosylformylglycinamidine synthase complex involved in the purines biosynthetic pathway. Catalyzes the ATP-dependent conversion of formylglycinamide ribonucleotide (FGAR) and glutamine to yield formylglycinamidine ribonucleotide (FGAM) and glutamate. The FGAM synthase complex is composed of three subunits. PurQ produces an ammonia molecule by converting glutamine to glutamate. PurL transfers the ammonia molecule to FGAR to form FGAM in an ATP-dependent manner. PurS interacts with PurQ and PurL and is thought to assist in the transfer of the ammonia molecule from PurQ to PurL. In Enterococcus faecalis (strain ATCC 700802 / V583), this protein is Phosphoribosylformylglycinamidine synthase subunit PurL.